A 261-amino-acid chain; its full sequence is Chanoclavine-I dehydrogenase ifgE (261 aa).

A signal peptide spans 1-20 (MASVKSRVFAITGGASGIGA). Residues isoleucine 18, lysine 48, aspartate 66, arginine 132, tyrosine 166, lysine 170, and threonine 201 each contribute to the NADP(+) site. The Proton acceptor role is filled by tyrosine 166. Lysine 170 functions as the Lowers pKa of active site Tyr in the catalytic mechanism.

It belongs to the short-chain dehydrogenases/reductases (SDR) family.

It participates in alkaloid biosynthesis; ergot alkaloid biosynthesis. In terms of biological role, chanoclavine-I dehydrogenase; part of the gene cluster that mediates the biosynthesis of isofumigaclavines, fungal ergot alkaloids. The tryptophan dimethylallyltransferase ifgA catalyzes the first step of ergot alkaloid biosynthesis by condensing dimethylallyl diphosphate (DMAP) and tryptophan to form 4-dimethylallyl-L-tryptophan. The second step is catalyzed by the methyltransferase ifgB that methylates 4-dimethylallyl-L-tryptophan in the presence of S-adenosyl-L-methionine, resulting in the formation of N-methyl-dimethylallyl-L-tryptophan. The catalase ifgD and the FAD-dependent oxidoreductase ifgC then transform N-methyl-dimethylallyl-L-tryptophan to chanoclavine-I which is further oxidized by ifgE in the presence of NAD(+), resulting in the formation of chanoclavine-I aldehyde. The chanoclavine-I aldehyde reductases ifgG and/or fgaOx3 reduce chanoclavine-I aldehyde to dihydrochanoclavine-I aldehyde that spontaneously dehydrates to form 6,8-dimethyl-6,7-didehydroergoline. The festuclavine dehydrogenases ifgF1 and/or ifgF2 then catalyze the reduction of 6,8-dimethyl-6,7-didehydroergoline to form festuclavine. Hydrolysis of festuclavine by a yet undetermined cytochrome P450 monooxygenase (called ifgH) then leads to the formation of isofumigaclavine B which is in turn acetylated by ifgI to isofumigaclavine A. Penicillium roqueforti has interestingly at least two sets of genes for the consumption of chanoclavine-I aldehyde on three different loci, the OYEs ifgG/fgaOx3 and the festuclavine synthase homologs ifgF1/ifgF2. The reason for the duplication of these genes is unclear, probably to ensure the conversion of chanoclavine-I aldehyde by differential gene expression under various environmental conditions. In Penicillium roqueforti (strain FM164), this protein is Chanoclavine-I dehydrogenase ifgE.